Here is a 449-residue protein sequence, read N- to C-terminus: MSHIKFDYSKVLDKFVAPHEVEYMQSQVTAADELIRKGTGAGSDFLGWLDLPEKYDREEFDRILKAAEQIKSDSDVLVVIGIGGSYLGAKAAIDFLNHHFANLQTKEERKAPQILYAGNSISSTYLADLVEYVADKDFSVNVISKSGTTTEPAIAFRVFKELLVKKYGQEEANKRIYATTDRQKGAVKVEADANGWGTFVVPDDIGGRFSVLTAVGLLPIAASGADIKALMEGANAARKDYTSDKISENEAYQYAAVRNILYRKGYATEILVNYEPSLQYFSEWWKQLAGESEGKDQKGIYPTSANFSTDLHSLGQFIQEGTRIMFETVVRVDKPRKNVIIPTLEEDLDGLGYLQGKDVDFVNKKATDGVLLAHTDGDVPNMYVTLPEQDAFTLGYTIYFFELAIALSGYLNAINPFDQPGVEAYKRNMFALLGKPGFEELSKELNARL.

Catalysis depends on glutamate 291, which acts as the Proton donor. Residues histidine 312 and lysine 426 contribute to the active site.

Belongs to the GPI family.

It is found in the cytoplasm. The catalysed reaction is alpha-D-glucose 6-phosphate = beta-D-fructose 6-phosphate. Its pathway is carbohydrate biosynthesis; gluconeogenesis. The protein operates within carbohydrate degradation; glycolysis; D-glyceraldehyde 3-phosphate and glycerone phosphate from D-glucose: step 2/4. Its function is as follows. Catalyzes the reversible isomerization of glucose-6-phosphate to fructose-6-phosphate. In Streptococcus pneumoniae (strain CGSP14), this protein is Glucose-6-phosphate isomerase.